The chain runs to 249 residues: MAGHSQFSNIKYRKGAQDAKRSQRFTKLIREITVAAKQGLPDPEFNPRLRSAVFAARKENLPKDRIETAIKNAAGNVAGENYEEIQYEGHGPFGTALIVHVLTNNRNRAASEVRYIFSRKNGSLGETGSVSYLFDHVGLIVYKAESVNFDDLFSHGIELEVLNVEENNIEGLYVITCRVKDFGKVRNAFYAKFGEPELARLSWQPKDLIEISDKKLIDKLSALVEELEDNDDVQYVEGNFAFAGLSLKL.

This sequence belongs to the TACO1 family.

The protein localises to the cytoplasm. The sequence is that of Probable transcriptional regulatory protein Wbm0670 from Wolbachia sp. subsp. Brugia malayi (strain TRS).